Here is a 143-residue protein sequence, read N- to C-terminus: 18.1 kDa class I heat shock protein (143 aa).

Residues 29-143 (ENSAFVSTRI…PEVKSIEISS (115 aa)) enclose the sHSP domain.

This sequence belongs to the small heat shock protein (HSP20) family. In terms of assembly, forms oligomeric structures.

It is found in the cytoplasm. This Medicago sativa (Alfalfa) protein is 18.1 kDa class I heat shock protein (HSP18.1).